Here is a 173-residue protein sequence, read N- to C-terminus: Putative 4-hydroxy-4-methyl-2-oxoglutarate aldolase (173 aa).

Residues 89–92 and Arg-111 contribute to the substrate site; that span reads GGNL. An a divalent metal cation-binding site is contributed by Asp-112.

It belongs to the class II aldolase/RraA-like family. As to quaternary structure, homotrimer. Requires a divalent metal cation as cofactor.

The enzyme catalyses 4-hydroxy-4-methyl-2-oxoglutarate = 2 pyruvate. The catalysed reaction is oxaloacetate + H(+) = pyruvate + CO2. Its function is as follows. Catalyzes the aldol cleavage of 4-hydroxy-4-methyl-2-oxoglutarate (HMG) into 2 molecules of pyruvate. Also contains a secondary oxaloacetate (OAA) decarboxylase activity due to the common pyruvate enolate transition state formed following C-C bond cleavage in the retro-aldol and decarboxylation reactions. This Albidiferax ferrireducens (strain ATCC BAA-621 / DSM 15236 / T118) (Rhodoferax ferrireducens) protein is Putative 4-hydroxy-4-methyl-2-oxoglutarate aldolase.